We begin with the raw amino-acid sequence, 81 residues long: MEIARETLITIGLTILVVLLIITGFSLVLRLIPGVYSSVSRSSFTAGRILRFMEIFSTIMFIPGIIILYAAYIRKIKMKNN.

Helical transmembrane passes span 8-28 (LITI…FSLV) and 53-73 (MEIF…AAYI).

This sequence belongs to the Chordopoxvirinae I5 family.

It localises to the virion membrane. This is Protein I5 homolog from Vertebrata (FPV).